The primary structure comprises 109 residues: Class I hydrophobin dewE (109 aa).

An N-terminal signal peptide occupies residues 1-20 (MKVATALSVLAVAGSALASA). Intrachain disulfides connect cysteine 34-cysteine 87, cysteine 40-cysteine 81, cysteine 41-cysteine 74, and cysteine 88-cysteine 102.

This sequence belongs to the fungal hydrophobin family. In terms of assembly, self-assembles to form functional amyloid fibrils called rodlets. Self-assembly into fibrillar rodlets occurs spontaneously at hydrophobic:hydrophilic interfaces and the rodlets further associate laterally to form amphipathic monolayers.

It is found in the secreted. The protein localises to the spore wall. Its function is as follows. Aerial growth, conidiation, and dispersal of filamentous fungi in the environment rely upon a capability of their secreting small amphipathic proteins called hydrophobins (HPBs) with low sequence identity. Class I can self-assemble into an outermost layer of rodlet bundles on aerial cell surfaces, conferring cellular hydrophobicity that supports fungal growth, development and dispersal; whereas Class II form highly ordered films at water-air interfaces through intermolecular interactions but contribute nothing to the rodlet structure. DewE is a class I hydrophobin that contributes to the hydrophobicity of the spore surface. This is Class I hydrophobin dewE from Emericella nidulans (strain FGSC A4 / ATCC 38163 / CBS 112.46 / NRRL 194 / M139) (Aspergillus nidulans).